Consider the following 122-residue polypeptide: UPF0102 protein XCV0816 (122 aa).

It belongs to the UPF0102 family.

The chain is UPF0102 protein XCV0816 from Xanthomonas euvesicatoria pv. vesicatoria (strain 85-10) (Xanthomonas campestris pv. vesicatoria).